A 193-amino-acid chain; its full sequence is ATP-dependent Clp protease proteolytic subunit 2 (193 aa).

Serine 98 serves as the catalytic Nucleophile. Histidine 123 is a catalytic residue.

The protein belongs to the peptidase S14 family. Fourteen ClpP subunits assemble into 2 heptameric rings which stack back to back to give a disk-like structure with a central cavity, resembling the structure of eukaryotic proteasomes.

It is found in the cytoplasm. It carries out the reaction Hydrolysis of proteins to small peptides in the presence of ATP and magnesium. alpha-casein is the usual test substrate. In the absence of ATP, only oligopeptides shorter than five residues are hydrolyzed (such as succinyl-Leu-Tyr-|-NHMec, and Leu-Tyr-Leu-|-Tyr-Trp, in which cleavage of the -Tyr-|-Leu- and -Tyr-|-Trp bonds also occurs).. Its function is as follows. Cleaves peptides in various proteins in a process that requires ATP hydrolysis. Has a chymotrypsin-like activity. Plays a major role in the degradation of misfolded proteins. In Bacillus cereus (strain ATCC 14579 / DSM 31 / CCUG 7414 / JCM 2152 / NBRC 15305 / NCIMB 9373 / NCTC 2599 / NRRL B-3711), this protein is ATP-dependent Clp protease proteolytic subunit 2.